The following is a 278-amino-acid chain: uncharacterized protein (278 aa).

It belongs to the manganese catalase family.

This is an uncharacterized protein from Bacillus subtilis (strain 168).